The primary structure comprises 509 residues: Cytochrome P450 4X1 (509 aa).

A helical membrane pass occupies residues 14–34 (FYLAFVFCLALGLLQAIKLYL). Cysteine 454 is a binding site for heme.

This sequence belongs to the cytochrome P450 family. Requires heme as cofactor. In terms of tissue distribution, expressed in brain, heart, kidney and skin and, at lower levels, in skeletal muscle and liver. In the brain, high levels are detected in amygdala and lower levels in globus pallidus and cerebellum. In the heart, very high levels in aorta, but very low levels in other heart regions. Also expressed in breast, prostate and colon.

It localises to the endoplasmic reticulum membrane. The protein resides in the microsome membrane. The enzyme catalyses N-(5Z,8Z,11Z,14Z-eicosatetraenoyl)-ethanolamine + reduced [NADPH--hemoprotein reductase] + O2 = N-(14,15-epoxy-5Z,8Z,11Z-eicosatrienoyl)-ethanolamine + oxidized [NADPH--hemoprotein reductase] + H2O + H(+). In terms of biological role, a cytochrome P450 monooxygenase that selectively catalyzes the epoxidation of the last double bond of the arachidonoyl moiety of anandamide, potentially modulating endocannabinoid signaling. Has no hydroxylase activity toward various fatty acids, steroids and prostaglandins. Mechanistically, uses molecular oxygen inserting one oxygen atom into a substrate, and reducing the second into a water molecule, with two electrons provided by NADPH via cytochrome P450 reductase (CPR; NADPH-ferrihemoprotein reductase). This chain is Cytochrome P450 4X1, found in Homo sapiens (Human).